A 30-amino-acid chain; its full sequence is ATP-dependent Clp protease ATP-binding subunit ClpA homolog (30 aa).

It belongs to the ClpA/ClpB family.

The protein localises to the plastid. It is found in the chloroplast. Its function is as follows. May interact with a ClpP-like protease involved in degradation of denatured proteins in the chloroplast. This chain is ATP-dependent Clp protease ATP-binding subunit ClpA homolog, found in Pinus pinaster (Maritime pine).